The following is a 493-amino-acid chain: Glycerol kinase (493 aa).

Thr-11 lines the ADP pocket. ATP contacts are provided by Thr-11, Thr-12, and Ser-13. Residue Thr-11 participates in sn-glycerol 3-phosphate binding. Position 15 (Arg-15) interacts with ADP. Residues Arg-80, Glu-81, Tyr-132, and Asp-241 each contribute to the sn-glycerol 3-phosphate site. Glycerol contacts are provided by Arg-80, Glu-81, Tyr-132, Asp-241, and Gln-242. Residues Thr-263 and Gly-306 each contribute to the ADP site. Residues Thr-263, Gly-306, Gln-310, and Gly-408 each contribute to the ATP site. Gly-408 contributes to the ADP binding site.

This sequence belongs to the FGGY kinase family.

The catalysed reaction is glycerol + ATP = sn-glycerol 3-phosphate + ADP + H(+). It participates in polyol metabolism; glycerol degradation via glycerol kinase pathway; sn-glycerol 3-phosphate from glycerol: step 1/1. Inhibited by fructose 1,6-bisphosphate (FBP). Key enzyme in the regulation of glycerol uptake and metabolism. Catalyzes the phosphorylation of glycerol to yield sn-glycerol 3-phosphate. In Cereibacter sphaeroides (strain ATCC 17023 / DSM 158 / JCM 6121 / CCUG 31486 / LMG 2827 / NBRC 12203 / NCIMB 8253 / ATH 2.4.1.) (Rhodobacter sphaeroides), this protein is Glycerol kinase.